Consider the following 81-residue polypeptide: Photosystem I iron-sulfur center (81 aa).

4Fe-4S ferredoxin-type domains lie at 2 to 31 (SHFV…MIPW) and 39 to 68 (IASA…VRVY). The [4Fe-4S] cluster site is built by Cys11, Cys14, Cys17, Cys21, Cys48, Cys51, Cys54, and Cys58.

As to quaternary structure, the eukaryotic PSI reaction center is composed of at least 11 subunits. The cofactor is [4Fe-4S] cluster.

Its subcellular location is the plastid thylakoid membrane. The enzyme catalyses reduced [plastocyanin] + hnu + oxidized [2Fe-2S]-[ferredoxin] = oxidized [plastocyanin] + reduced [2Fe-2S]-[ferredoxin]. Apoprotein for the two 4Fe-4S centers FA and FB of photosystem I (PSI); essential for photochemical activity. FB is the terminal electron acceptor of PSI, donating electrons to ferredoxin. The C-terminus interacts with PsaA/B/D and helps assemble the protein into the PSI complex. Required for binding of PsaD and PsaE to PSI. PSI is a plastocyanin-ferredoxin oxidoreductase, converting photonic excitation into a charge separation, which transfers an electron from the donor P700 chlorophyll pair to the spectroscopically characterized acceptors A0, A1, FX, FA and FB in turn. In Cuscuta exaltata (Tall dodder), this protein is Photosystem I iron-sulfur center.